We begin with the raw amino-acid sequence, 664 residues long: RBBP8 N-terminal-like protein (664 aa).

A compositionally biased stretch (basic and acidic residues) spans 125–140 (LRGLGDRPKPRAKEGT). Disordered stretches follow at residues 125–284 (LRGL…KLSP) and 369–664 (RAGS…WEET). Over residues 241 to 255 (GTPPPLPARSSPPSP) the composition is skewed to pro residues. A compositionally biased stretch (basic and acidic residues) spans 437-454 (ALDKPLDLSEWGRARGQD). Positions 481-496 (SGPLTRSPQALSNGTK) are enriched in polar residues. Low complexity predominate over residues 516–528 (LPGSQLSLSSPGS). Pro residues predominate over residues 537-552 (PLPPPHPQPPPHPQPP). The span at 554–570 (LDGHPEPSKAEVLRPES) shows a compositional bias: basic and acidic residues. Positions 584–597 (GLSSQAEATTSTTG) are enriched in polar residues. Residues 628 to 637 (KKPSRGRRKL) are compositionally biased toward basic residues. A compositionally biased stretch (polar residues) spans 654–664 (PSPNSSPWEET).

The sequence is that of RBBP8 N-terminal-like protein (RBBP8NL) from Homo sapiens (Human).